The sequence spans 430 residues: Tol-Pal system protein TolB (430 aa).

The first 19 residues, methionine 1–alanine 19, serve as a signal peptide directing secretion.

Belongs to the TolB family. The Tol-Pal system is composed of five core proteins: the inner membrane proteins TolA, TolQ and TolR, the periplasmic protein TolB and the outer membrane protein Pal. They form a network linking the inner and outer membranes and the peptidoglycan layer.

The protein resides in the periplasm. Its function is as follows. Part of the Tol-Pal system, which plays a role in outer membrane invagination during cell division and is important for maintaining outer membrane integrity. The protein is Tol-Pal system protein TolB of Hahella chejuensis (strain KCTC 2396).